A 61-amino-acid polypeptide reads, in one-letter code: Defensin-like peptide TXKs2 (61 aa).

The N-terminal stretch at 1–19 (MTYAILIIVSLLLISDRIS) is a signal peptide. Positions 20–22 (NVV) are excised as a propeptide. 3 disulfides stabilise this stretch: cysteine 26/cysteine 47, cysteine 33/cysteine 56, and cysteine 37/cysteine 58.

Belongs to the invertebrate defensin family. As to expression, expressed by the venom gland.

The protein localises to the secreted. Antibacterial protein. This chain is Defensin-like peptide TXKs2, found in Olivierus martensii (Manchurian scorpion).